The primary structure comprises 463 residues: Major capsid protein (463 aa).

The protein belongs to the NCLDV major capsid protein family. In terms of assembly, homotrimer.

The protein localises to the virion. Functionally, major capsid protein that self assembles to form an icosahedral capsid. Represents around 50% of the total virion protein mass. The polypeptide is Major capsid protein (MCP) (Rana tigrina ranavirus).